The primary structure comprises 322 residues: Lactamase-like protein nscB (322 aa).

Zn(2+) is bound by residues H97, H99, D101, and H102. D101 acts as the Proton donor/acceptor in catalysis.

The protein belongs to the metallo-beta-lactamase superfamily. It depends on Zn(2+) as a cofactor.

It participates in secondary metabolite biosynthesis. Functionally, lactamase-like protein; part of the gene cluster that mediates the biosynthesis of neosartoricin B, a prenylated anthracenone that probably exhibits T-cell antiproliferative activity, suggestive of a physiological role as an immunosuppressive agent. The non-reducing polyketide synthase nscA probably synthesizes and cyclizes the decaketide backbone. The hydrolase nscB then mediates the product release through hydrolysis followed by spontaneous decarboxylation. The prenyltransferase nscD catalyzes the addition of the dimethylallyl group to the aromatic C5. The FAD-dependent monooxygenase nscC is then responsible for the stereospecific hydroxylation at C2. Neosartoricin B can be converted into two additional compounds neosartoricins C and D. Neosartoricin C is a spirocyclic compound that is cyclized through the attack of C3 hydroxyl on C14, followed by dehydration. On the other hand, neosartoricin D is a further cyclized compound in which attack of C2 on C14 in neosartoricin C results in the formation of the acetal-containing dioxabicyclo-octanone ring. Both of these compounds are novel and possibly represent related metabolites of the gene cluster. The polypeptide is Lactamase-like protein nscB (Trichophyton rubrum (strain ATCC MYA-4607 / CBS 118892) (Athlete's foot fungus)).